Here is a 303-residue protein sequence, read N- to C-terminus: Putative band 7 family protein R614 (303 aa).

This sequence belongs to the band 7/mec-2 family.

This is Putative band 7 family protein R614 from Acanthamoeba polyphaga (Amoeba).